The chain runs to 208 residues: MGEPAFTSFPSLPVLGKLKRNMMPWALQKKREIHMAKAHRRRAARSALPMRLTSCIFRRPVTRIRSHPDNQVRRRKGDEHLEKPQQLCAYRRLQALQPCSSQGEGSSPLHLESVLSILAPGTAGESLDRAGAERVRSPLEPTPGRFPAVAGGPTPGMGCQLPPPLSGQLVTPADIRRQARRVKKARERLAKALQADRLARRAEMLTGG.

Positions 1-89 (MGEPAFTSFP…HLEKPQQLCA (89 aa)) are interacts with MBD3.

Belongs to the MBD3L family. In terms of assembly, interacts (via N-terminus) with MBD3; the interaction is direct. Interacts with MTA1. Interacts with HDAC1. Interacts with HDAC2. Interacts with RBBP4. Interacts with RBBP7. In terms of tissue distribution, detected at low levels in several somatic tissues. Highly expressed in the ovarian teratocarcinoma cell line PA-1.

The protein resides in the nucleus. Functionally, may displace the NuRD complex from chromatin. The polypeptide is Methyl-CpG-binding domain protein 3-like 2 (MBD3L2) (Homo sapiens (Human)).